The chain runs to 348 residues: S-adenosylmethionine:tRNA ribosyltransferase-isomerase (348 aa).

This sequence belongs to the QueA family. Monomer.

Its subcellular location is the cytoplasm. The enzyme catalyses 7-aminomethyl-7-carbaguanosine(34) in tRNA + S-adenosyl-L-methionine = epoxyqueuosine(34) in tRNA + adenine + L-methionine + 2 H(+). It participates in tRNA modification; tRNA-queuosine biosynthesis. Functionally, transfers and isomerizes the ribose moiety from AdoMet to the 7-aminomethyl group of 7-deazaguanine (preQ1-tRNA) to give epoxyqueuosine (oQ-tRNA). The sequence is that of S-adenosylmethionine:tRNA ribosyltransferase-isomerase from Polynucleobacter necessarius subsp. necessarius (strain STIR1).